A 278-amino-acid polypeptide reads, in one-letter code: Lipoyl-[GcvH]:protein N-lipoyltransferase (278 aa).

The region spanning 44–250 is the BPL/LPL catalytic domain; that stretch reads RMAPSTVRGW…SLRHYAGDLV (207 aa). Catalysis depends on cysteine 149, which acts as the Acyl-thioester intermediate.

This sequence belongs to the octanoyltransferase LipL family.

It catalyses the reaction N(6)-[(R)-lipoyl]-L-lysyl-[glycine-cleavage complex H protein] + L-lysyl-[lipoyl-carrier protein] = L-lysyl-[glycine-cleavage complex H protein] + N(6)-[(R)-lipoyl]-L-lysyl-[lipoyl-carrier protein]. The protein operates within protein modification; protein lipoylation via exogenous pathway. Its function is as follows. Catalyzes the amidotransfer (transamidation) of the lipoyl moiety from lipoyl-GcvH to the lipoyl domain of the E2 subunit of lipoate-dependent enzymes. Takes part in a pathway for scavenging of lipoic acid derived from eukaryotic host cells. Cannot use lipoyl-tripeptide (DK(L)A), lipoamide (LD), or free lipoate as substrate. The sequence is that of Lipoyl-[GcvH]:protein N-lipoyltransferase from Listeria monocytogenes serovar 1/2a (strain ATCC BAA-679 / EGD-e).